Reading from the N-terminus, the 191-residue chain is Chorion class B protein Ld10 (191 aa).

A signal peptide spans 1-21; the sequence is MSAKIILVFCAQALFVQSALS.

Belongs to the chorion protein family.

In terms of biological role, this protein is one of many from the eggshell of the gypsy moth. The sequence is that of Chorion class B protein Ld10 from Lymantria dispar (Gypsy moth).